The sequence spans 776 residues: Ecdysone receptor (776 aa).

The segment at 1–290 is modulating; it reads MYRLNIVSTN…GPTPRQQEEL (290 aa). The tract at residues 199–283 is disordered; the sequence is NEEWISSPSP…DAKKQKKGPT (85 aa). Positions 204–213 are enriched in low complexity; it reads SSPSPGSVPG. Polar residues-rich tracts occupy residues 227–245 and 261–270; these read TTYT…STGS and SPSSSLNGYT. A DNA-binding region (nuclear receptor) is located at residues 288-363; the sequence is EELCLVCGDR…VGMRPECVVP (76 aa). NR C4-type zinc fingers lie at residues 291-311 and 327-346; these read CLVC…CEGC and CKFG…CQEC. One can recognise an NR LBD domain in the interval 437–673; that stretch reads NQMAVIYKLI…FLEEIWDVQD (237 aa). Polar residues predominate over residues 679 to 688; the sequence is QAQMHSHGTQ. A disordered region spans residues 679–776; that stretch reads QAQMHSHGTQ…VPGLGMLDQV (98 aa). Positions 689-745 are enriched in low complexity; sequence SSSSSSSSSSSSSNGSSNGNSSSNSNSSQHGPHPHPHGQQLTPNQQQHQQQHSQLQQ.

Belongs to the nuclear hormone receptor family. NR1 subfamily. In terms of assembly, heterodimer of USP and ECR. Only the heterodimer is capable of high-affinity binding to ecdysone. A peak level expression is seen in the fat body of previtellogenic female mosquitos at one and two days after eclosion, levels fall three-fold at three days posteclosion.

The protein localises to the nucleus. Receptor for ecdysone. Binds to ecdysone response elements (ECRES). The protein is Ecdysone receptor (EcR) of Aedes aegypti (Yellowfever mosquito).